A 508-amino-acid polypeptide reads, in one-letter code: Light-independent protochlorophyllide reductase subunit B (508 aa).

Asp36 is a binding site for [4Fe-4S] cluster. The active-site Proton donor is the Asp294. 429–430 provides a ligand contact to substrate; that stretch reads GM.

This sequence belongs to the ChlB/BchB/BchZ family. In terms of assembly, protochlorophyllide reductase is composed of three subunits; ChlL, ChlN and ChlB. Forms a heterotetramer of two ChlB and two ChlN subunits. [4Fe-4S] cluster serves as cofactor.

It catalyses the reaction chlorophyllide a + oxidized 2[4Fe-4S]-[ferredoxin] + 2 ADP + 2 phosphate = protochlorophyllide a + reduced 2[4Fe-4S]-[ferredoxin] + 2 ATP + 2 H2O. The protein operates within porphyrin-containing compound metabolism; chlorophyll biosynthesis (light-independent). Component of the dark-operative protochlorophyllide reductase (DPOR) that uses Mg-ATP and reduced ferredoxin to reduce ring D of protochlorophyllide (Pchlide) to form chlorophyllide a (Chlide). This reaction is light-independent. The NB-protein (ChlN-ChlB) is the catalytic component of the complex. The chain is Light-independent protochlorophyllide reductase subunit B from Nostoc punctiforme (strain ATCC 29133 / PCC 73102).